The chain runs to 376 residues: Arabinogalactan endo-beta-1,4-galactanase (376 aa).

An N-terminal signal peptide occupies residues 1 to 17 (MKKKILAATAILLAAIA). Glu161 acts as the Proton donor in catalysis. Glu270 serves as the catalytic Nucleophile. Asp281 and Asn285 together coordinate Ca(2+).

This sequence belongs to the glycosyl hydrolase 53 family. The cofactor is Ca(2+).

It catalyses the reaction The enzyme specifically hydrolyzes (1-&gt;4)-beta-D-galactosidic linkages in type I arabinogalactans.. The chain is Arabinogalactan endo-beta-1,4-galactanase (ganB) from Cellvibrio japonicus (strain Ueda107) (Pseudomonas fluorescens subsp. cellulosa).